Reading from the N-terminus, the 57-residue chain is Small ribosomal subunit protein bS21 (57 aa).

Belongs to the bacterial ribosomal protein bS21 family.

The chain is Small ribosomal subunit protein bS21 from Bacillus cytotoxicus (strain DSM 22905 / CIP 110041 / 391-98 / NVH 391-98).